Reading from the N-terminus, the 812-residue chain is Lon protease (812 aa).

Residues 22-215 enclose the Lon N-terminal domain; sequence YAVLPLRDIV…KALSFMEAEI (194 aa). 367 to 374 serves as a coordination point for ATP; the sequence is GPPGVGKT. A Lon proteolytic domain is found at 602–783; sequence EDQVGVVTGL…GEVLKHALVR (182 aa). Residues Ser-689 and Lys-732 contribute to the active site. A disordered region spans residues 787-812; the sequence is PIEWTEQENPTAVPPVEDEAGASLAH.

It belongs to the peptidase S16 family. In terms of assembly, homohexamer. Organized in a ring with a central cavity.

The protein resides in the cytoplasm. The enzyme catalyses Hydrolysis of proteins in presence of ATP.. Functionally, ATP-dependent serine protease that mediates the selective degradation of mutant and abnormal proteins as well as certain short-lived regulatory proteins. Required for cellular homeostasis and for survival from DNA damage and developmental changes induced by stress. Degrades polypeptides processively to yield small peptide fragments that are 5 to 10 amino acids long. Binds to DNA in a double-stranded, site-specific manner. Required for wild-type virulence during the initial stages of infection in the mouse model, but not essential for the establishment and maintenance of chronic infection in this host. The protein is Lon protease of Brucella abortus (strain 2308).